Reading from the N-terminus, the 216-residue chain is Thiamine-phosphate synthase (216 aa).

4-amino-2-methyl-5-(diphosphooxymethyl)pyrimidine contacts are provided by residues 35–39 and asparagine 67; that span reads QLRDK. Mg(2+) contacts are provided by aspartate 68 and aspartate 87. Serine 106 lines the 4-amino-2-methyl-5-(diphosphooxymethyl)pyrimidine pocket. Residue 132-134 participates in 2-[(2R,5Z)-2-carboxy-4-methylthiazol-5(2H)-ylidene]ethyl phosphate binding; it reads TSS. Lysine 135 provides a ligand contact to 4-amino-2-methyl-5-(diphosphooxymethyl)pyrimidine. Residues glycine 163 and 183–184 each bind 2-[(2R,5Z)-2-carboxy-4-methylthiazol-5(2H)-ylidene]ethyl phosphate; that span reads IS.

Belongs to the thiamine-phosphate synthase family. Requires Mg(2+) as cofactor.

It carries out the reaction 2-[(2R,5Z)-2-carboxy-4-methylthiazol-5(2H)-ylidene]ethyl phosphate + 4-amino-2-methyl-5-(diphosphooxymethyl)pyrimidine + 2 H(+) = thiamine phosphate + CO2 + diphosphate. The enzyme catalyses 2-(2-carboxy-4-methylthiazol-5-yl)ethyl phosphate + 4-amino-2-methyl-5-(diphosphooxymethyl)pyrimidine + 2 H(+) = thiamine phosphate + CO2 + diphosphate. It catalyses the reaction 4-methyl-5-(2-phosphooxyethyl)-thiazole + 4-amino-2-methyl-5-(diphosphooxymethyl)pyrimidine + H(+) = thiamine phosphate + diphosphate. Its pathway is cofactor biosynthesis; thiamine diphosphate biosynthesis; thiamine phosphate from 4-amino-2-methyl-5-diphosphomethylpyrimidine and 4-methyl-5-(2-phosphoethyl)-thiazole: step 1/1. In terms of biological role, condenses 4-methyl-5-(beta-hydroxyethyl)thiazole monophosphate (THZ-P) and 2-methyl-4-amino-5-hydroxymethyl pyrimidine pyrophosphate (HMP-PP) to form thiamine monophosphate (TMP). The polypeptide is Thiamine-phosphate synthase (Methanoregula boonei (strain DSM 21154 / JCM 14090 / 6A8)).